A 293-amino-acid chain; its full sequence is MKVLAIDIGGTKIALGNVVEGHLQHRKQFPTPVVNDATTLAKEILAHCQAWLSDVDAIGISTTGLVSEQGISAINPGTLSFPTPFPLHSELHRLSGKPVKMLNDAQAAAWYEFLQLSPELDVRNMAYITVSTGVGGGLVINQQLHKGKSNFAGHIGHTVLDPNGPLCGCQQRGCVEAIASGNAINAGAQALFGQAISNIELFQLAQHNEQASTLIQQSAEAIAQLCLNLKATLDLDLVVIGGGVGLARGYLARVQAFIDKQPLVFQVKVRAAVGDYDACLLGAAFQFEESNLS.

ATP-binding positions include 5–12 (AIDIGGTK) and 133–140 (GVGGGLVI). The Zn(2+) site is built by histidine 157, cysteine 167, cysteine 169, and cysteine 174.

It belongs to the ROK (NagC/XylR) family. NanK subfamily. Homodimer.

It carries out the reaction an N-acyl-D-mannosamine + ATP = an N-acyl-D-mannosamine 6-phosphate + ADP + H(+). The protein operates within amino-sugar metabolism; N-acetylneuraminate degradation; D-fructose 6-phosphate from N-acetylneuraminate: step 2/5. In terms of biological role, catalyzes the phosphorylation of N-acetylmannosamine (ManNAc) to ManNAc-6-P. The sequence is that of N-acetylmannosamine kinase from Vibrio vulnificus (strain CMCP6).